Consider the following 237-residue polypeptide: Undecaprenyl-diphosphatase (237 aa).

The next 7 helical transmembrane spans lie at 38–58, 65–85, 92–112, 126–146, 166–186, 191–211, and 217–237; these read QTAVLHLGTLVSVVLFAFDGI, WRIILNLIVSTIPAGVFGVLF, LFSSPRFLPLFFSVTALILMF, MSFLDALLVGIAQLFALFPGI, ALQYSFLMSIPVVLGAGILGL, ITILAPIFAFLSGLFALYVLS, and GKIWQFSYYCLFVAILSYLVG.

This sequence belongs to the UppP family.

It is found in the cell inner membrane. The enzyme catalyses di-trans,octa-cis-undecaprenyl diphosphate + H2O = di-trans,octa-cis-undecaprenyl phosphate + phosphate + H(+). Catalyzes the dephosphorylation of undecaprenyl diphosphate (UPP). Confers resistance to bacitracin. The protein is Undecaprenyl-diphosphatase of Thermotoga petrophila (strain ATCC BAA-488 / DSM 13995 / JCM 10881 / RKU-1).